The following is a 575-amino-acid chain: DNA-directed RNA polymerase subunit beta' (575 aa).

The Zn(2+) site is built by Cys64, Cys66, Cys85, and Cys88. Positions 440, 442, and 444 each coordinate Mg(2+).

It belongs to the RNA polymerase beta' chain family. RpoC1 subfamily. As to quaternary structure, in plastids the minimal PEP RNA polymerase catalytic core is composed of four subunits: alpha, beta, beta', and beta''. When a (nuclear-encoded) sigma factor is associated with the core the holoenzyme is formed, which can initiate transcription. Requires Mg(2+) as cofactor. It depends on Zn(2+) as a cofactor.

It localises to the plastid. It catalyses the reaction RNA(n) + a ribonucleoside 5'-triphosphate = RNA(n+1) + diphosphate. Its function is as follows. DNA-dependent RNA polymerase catalyzes the transcription of DNA into RNA using the four ribonucleoside triphosphates as substrates. In Euglena longa (Euglenophycean alga), this protein is DNA-directed RNA polymerase subunit beta'.